The following is a 192-amino-acid chain: Imidazole glycerol phosphate synthase subunit HisH (192 aa).

The region spanning 1–192 (MIAIIDYGLG…QALKGGFIND (192 aa)) is the Glutamine amidotransferase type-1 domain. Cys77 (nucleophile) is an active-site residue. Residues His169 and Glu171 contribute to the active site.

In terms of assembly, heterodimer of HisH and HisF.

Its subcellular location is the cytoplasm. It carries out the reaction 5-[(5-phospho-1-deoxy-D-ribulos-1-ylimino)methylamino]-1-(5-phospho-beta-D-ribosyl)imidazole-4-carboxamide + L-glutamine = D-erythro-1-(imidazol-4-yl)glycerol 3-phosphate + 5-amino-1-(5-phospho-beta-D-ribosyl)imidazole-4-carboxamide + L-glutamate + H(+). The catalysed reaction is L-glutamine + H2O = L-glutamate + NH4(+). It participates in amino-acid biosynthesis; L-histidine biosynthesis; L-histidine from 5-phospho-alpha-D-ribose 1-diphosphate: step 5/9. In terms of biological role, IGPS catalyzes the conversion of PRFAR and glutamine to IGP, AICAR and glutamate. The HisH subunit catalyzes the hydrolysis of glutamine to glutamate and ammonia as part of the synthesis of IGP and AICAR. The resulting ammonia molecule is channeled to the active site of HisF. The polypeptide is Imidazole glycerol phosphate synthase subunit HisH (Staphylococcus epidermidis (strain ATCC 35984 / DSM 28319 / BCRC 17069 / CCUG 31568 / BM 3577 / RP62A)).